A 251-amino-acid chain; its full sequence is Hydroxyacylglutathione hydrolase (251 aa).

Residues histidine 53, histidine 55, aspartate 57, histidine 58, histidine 110, aspartate 127, and histidine 165 each contribute to the Zn(2+) site.

This sequence belongs to the metallo-beta-lactamase superfamily. Glyoxalase II family. As to quaternary structure, monomer. Requires Zn(2+) as cofactor.

It carries out the reaction an S-(2-hydroxyacyl)glutathione + H2O = a 2-hydroxy carboxylate + glutathione + H(+). It participates in secondary metabolite metabolism; methylglyoxal degradation; (R)-lactate from methylglyoxal: step 2/2. Its function is as follows. Thiolesterase that catalyzes the hydrolysis of S-D-lactoyl-glutathione to form glutathione and D-lactic acid. In Pectobacterium carotovorum subsp. carotovorum (strain PC1), this protein is Hydroxyacylglutathione hydrolase.